Consider the following 256-residue polypeptide: Putative cysteine-rich repeat secretory protein 21 (256 aa).

Positions 1–30 are cleaved as a signal peptide; it reads MYSSVSKRLVSVHILVVVALQLLFIPNVLS. 2 Gnk2-homologous domains span residues 37–139 and 145–253; these read YLHH…SIDT and YQNN…LYPF.

It belongs to the cysteine-rich repeat secretory protein family.

The protein localises to the secreted. The chain is Putative cysteine-rich repeat secretory protein 21 (CRRSP21) from Arabidopsis thaliana (Mouse-ear cress).